We begin with the raw amino-acid sequence, 123 residues long: UPF0482 protein YE2026 (123 aa).

An N-terminal signal peptide occupies residues 1 to 31 (MKITSLPRLMRVFLPVAVLALPLAWQTAALA). The interval 47–66 (GNNDPMSKEQARQSQQQWDD) is disordered.

This sequence belongs to the UPF0482 family.

This is UPF0482 protein YE2026 from Yersinia enterocolitica serotype O:8 / biotype 1B (strain NCTC 13174 / 8081).